Reading from the N-terminus, the 375-residue chain is Chaperone protein DnaJ (375 aa).

The J domain occupies 5-70 (DFYEVLGVER…SKRAAYDQYG (66 aa)). The CR-type zinc finger occupies 134–212 (GTTVSIRVPT…CHGEGRVEEY (79 aa)). Positions 147, 150, 164, 167, 186, 189, 200, and 203 each coordinate Zn(2+). CXXCXGXG motif repeat units follow at residues 147–154 (CKPCDGSG), 164–171 (CPTCGGIG), 186–193 (CPRCHGQG), and 200–207 (CNSCHGEG).

Belongs to the DnaJ family. In terms of assembly, homodimer. Zn(2+) is required as a cofactor.

It is found in the cytoplasm. Functionally, participates actively in the response to hyperosmotic and heat shock by preventing the aggregation of stress-denatured proteins and by disaggregating proteins, also in an autonomous, DnaK-independent fashion. Unfolded proteins bind initially to DnaJ; upon interaction with the DnaJ-bound protein, DnaK hydrolyzes its bound ATP, resulting in the formation of a stable complex. GrpE releases ADP from DnaK; ATP binding to DnaK triggers the release of the substrate protein, thus completing the reaction cycle. Several rounds of ATP-dependent interactions between DnaJ, DnaK and GrpE are required for fully efficient folding. Also involved, together with DnaK and GrpE, in the DNA replication of plasmids through activation of initiation proteins. The sequence is that of Chaperone protein DnaJ from Pseudomonas entomophila (strain L48).